The chain runs to 212 residues: Orotate phosphoribosyltransferase (212 aa).

Lysine 26 serves as a coordination point for 5-phospho-alpha-D-ribose 1-diphosphate. An orotate-binding site is contributed by phenylalanine 34 to phenylalanine 35. 5-phospho-alpha-D-ribose 1-diphosphate contacts are provided by residues tyrosine 72–lysine 73, arginine 99, lysine 100, lysine 103, histidine 105, and aspartate 124–alanine 132. Residues threonine 128 and arginine 156 each contribute to the orotate site.

It belongs to the purine/pyrimidine phosphoribosyltransferase family. PyrE subfamily. As to quaternary structure, homodimer. Mg(2+) is required as a cofactor.

The catalysed reaction is orotidine 5'-phosphate + diphosphate = orotate + 5-phospho-alpha-D-ribose 1-diphosphate. The protein operates within pyrimidine metabolism; UMP biosynthesis via de novo pathway; UMP from orotate: step 1/2. Functionally, catalyzes the transfer of a ribosyl phosphate group from 5-phosphoribose 1-diphosphate to orotate, leading to the formation of orotidine monophosphate (OMP). This is Orotate phosphoribosyltransferase from Ruthia magnifica subsp. Calyptogena magnifica.